The sequence spans 155 residues: Protein SREK1IP1 (155 aa).

The CCHC-type zinc-finger motif lies at 13–30; sequence AGCKKCGYPGHLTFECRN. Positions 43–155 are disordered; sequence DVSSTSTEDS…SSSSQSSSSD (113 aa). Basic and acidic residues predominate over residues 58-74; that stretch reads EVARAPADKKNVTDTGK. Positions 75-93 are enriched in basic residues; it reads KKLKRKKEKKLKKHRKRLH. The segment covering 94-103 has biased composition (basic and acidic residues); sequence SSSESDDNSK. The span at 104 to 137 shows a compositional bias: basic residues; sequence AKKRKSQKKEKRVKHKAKKGKQHKKDKRKEKRER. A compositionally biased stretch (low complexity) spans 140–155; sequence SSSSSSSSSSQSSSSD.

Its function is as follows. Possible splicing regulator involved in the control of cellular survival. The polypeptide is Protein SREK1IP1 (srek1ip1) (Xenopus tropicalis (Western clawed frog)).